A 208-amino-acid chain; its full sequence is Protein-L-isoaspartate O-methyltransferase (208 aa).

Ser-59 is an active-site residue.

It belongs to the methyltransferase superfamily. L-isoaspartyl/D-aspartyl protein methyltransferase family.

The protein resides in the cytoplasm. The enzyme catalyses [protein]-L-isoaspartate + S-adenosyl-L-methionine = [protein]-L-isoaspartate alpha-methyl ester + S-adenosyl-L-homocysteine. Functionally, catalyzes the methyl esterification of L-isoaspartyl residues in peptides and proteins that result from spontaneous decomposition of normal L-aspartyl and L-asparaginyl residues. It plays a role in the repair and/or degradation of damaged proteins. This chain is Protein-L-isoaspartate O-methyltransferase, found in Serratia proteamaculans (strain 568).